A 124-amino-acid polypeptide reads, in one-letter code: Ribonuclease pancreatic (124 aa).

Substrate contacts are provided by K7 and R10. H12 functions as the Proton acceptor in the catalytic mechanism. Cystine bridges form between C26/C84, C40/C95, C58/C110, and C65/C72. N34 is a glycosylation site (N-linked (GlcNAc...) asparagine). Residues 41–45, K66, and R85 each bind substrate; that span reads KPVNT. The active-site Proton donor is the H119.

This sequence belongs to the pancreatic ribonuclease family. Monomer. Interacts with and forms tight 1:1 complexes with RNH1. Dimerization of two such complexes may occur. Interaction with RNH1 inhibits this protein. In terms of tissue distribution, pancreas.

Its subcellular location is the secreted. The catalysed reaction is an [RNA] containing cytidine + H2O = an [RNA]-3'-cytidine-3'-phosphate + a 5'-hydroxy-ribonucleotide-3'-[RNA].. It catalyses the reaction an [RNA] containing uridine + H2O = an [RNA]-3'-uridine-3'-phosphate + a 5'-hydroxy-ribonucleotide-3'-[RNA].. Its function is as follows. Endonuclease that catalyzes the cleavage of RNA on the 3' side of pyrimidine nucleotides. Acts on single-stranded and double-stranded RNA. The sequence is that of Ribonuclease pancreatic (RNASE1) from Mesocricetus auratus (Golden hamster).